Consider the following 100-residue polypeptide: Urease subunit gamma (100 aa).

The protein belongs to the urease gamma subunit family. In terms of assembly, heterotrimer of UreA (gamma), UreB (beta) and UreC (alpha) subunits. Three heterotrimers associate to form the active enzyme.

The protein localises to the cytoplasm. It carries out the reaction urea + 2 H2O + H(+) = hydrogencarbonate + 2 NH4(+). Its pathway is nitrogen metabolism; urea degradation; CO(2) and NH(3) from urea (urease route): step 1/1. The protein is Urease subunit gamma of Flavobacterium johnsoniae (strain ATCC 17061 / DSM 2064 / JCM 8514 / BCRC 14874 / CCUG 350202 / NBRC 14942 / NCIMB 11054 / UW101) (Cytophaga johnsonae).